A 130-amino-acid polypeptide reads, in one-letter code: Holo-[acyl-carrier-protein] synthase (130 aa).

Mg(2+) is bound by residues Asp-8 and Glu-62.

It belongs to the P-Pant transferase superfamily. AcpS family. It depends on Mg(2+) as a cofactor.

The protein localises to the cytoplasm. It carries out the reaction apo-[ACP] + CoA = holo-[ACP] + adenosine 3',5'-bisphosphate + H(+). Functionally, transfers the 4'-phosphopantetheine moiety from coenzyme A to a Ser of acyl-carrier-protein. This Herminiimonas arsenicoxydans protein is Holo-[acyl-carrier-protein] synthase.